A 287-amino-acid polypeptide reads, in one-letter code: 3-methyl-2-oxobutanoate hydroxymethyltransferase (287 aa).

2 residues coordinate Mg(2+): Asp-57 and Asp-96. Residues Asp-57–Ser-58, Asp-96, and Lys-125 contribute to the 3-methyl-2-oxobutanoate site. Position 127 (Glu-127) interacts with Mg(2+). Glu-194 acts as the Proton acceptor in catalysis.

It belongs to the PanB family. As to quaternary structure, homodecamer; pentamer of dimers. It depends on Mg(2+) as a cofactor.

It localises to the cytoplasm. It carries out the reaction 3-methyl-2-oxobutanoate + (6R)-5,10-methylene-5,6,7,8-tetrahydrofolate + H2O = 2-dehydropantoate + (6S)-5,6,7,8-tetrahydrofolate. It participates in cofactor biosynthesis; (R)-pantothenate biosynthesis; (R)-pantoate from 3-methyl-2-oxobutanoate: step 1/2. Its function is as follows. Catalyzes the reversible reaction in which hydroxymethyl group from 5,10-methylenetetrahydrofolate is transferred onto alpha-ketoisovalerate to form ketopantoate. The protein is 3-methyl-2-oxobutanoate hydroxymethyltransferase of Methylobacterium sp. (strain 4-46).